The following is a 348-amino-acid chain: Protein RecA (348 aa).

An ATP-binding site is contributed by Gly64–Thr71.

The protein belongs to the RecA family. In terms of assembly, monomer; forms higher-order oligomers. Interacts with RecU. Interacts with DprA (smf). Interacts with RecD2.

It localises to the cytoplasm. The protein resides in the nucleoid. Functionally, multifunctional protein involved in homologous recombination, DNA repair and competence. Can catalyze the hydrolysis of (d)ATP in the presence of single-stranded (ss)DNA; prefers dATP at least in vitro, catalyzes the dATP-dependent uptake of ssDNA by duplex DNA, and the dATP-dependent hybridization of homologous ssDNA (strand exchange). RecA-ATP cannot catalyze homologous DNA strand exchange; SsbA and DprA activate strand exchange by RecA-ATP. It interacts with LexA causing its activation and leading to its autocatalytic cleavage. Hydrolysis of ATP in the presence of ssDNA is partially inhibited by RecU. Required for DNA transformation; protects transforming DNA from degradation, possibly in combination with DprA. Blocks replication of both leading and lagging strand DNA in the presence of RecO and SsbA; RecD2 is able to overcome this blockage. Recruited to repair centers (RCs), foci that are the site of double-stranded DNA break(s), after RecN. Concomitant with the appearance of RecO at the RCs, RecA forms threads that extend from RCs toward the opposite cell half, possibly searching for sequence homology along the sister chromosome. The threads disappear after about 2 hours. Thread formation is absolutely dependent on RecJ or AadAB. Thread formation is also dependent on RarA. The polypeptide is Protein RecA (Bacillus subtilis (strain 168)).